The primary structure comprises 259 residues: Major cell-binding factor (259 aa).

The N-terminal stretch at 1-26 (MVFRKSLLKLAVFALGACVAFSNANA) is a signal peptide.

The protein belongs to the bacterial solute-binding protein 3 family.

The protein localises to the cell surface. Its function is as follows. Common antigen and a major cell adherence molecule. Most probably involved, with PEB1C, in a binding-protein-dependent transport system for an amino acid. May be involved in binding to intestinal cells. The chain is Major cell-binding factor (peb1A) from Campylobacter jejuni subsp. jejuni serotype O:23/36 (strain 81-176).